The primary structure comprises 1131 residues: MDIRKFFGVISSGKKPVNETVKNEKTKASEGTVKGKKGVKEAKVNNSGKEDASKPKQHSKKKRIIYDSDSESEETVQVKNAKKKSEKLSLSYKPGKVSQKDPVTYVSETDEDDDFVCKKAASKSKENGVSTNSYLGTSNVKKNEENVKTKNKPLSPIKLTPTSVLDYFGTESVQRSGKKMVTSKRKESSQNTEDSRLNDEAIAKQLQLDEDAELERQLHEDEEFARTLALLDEEPKIKKARKDSEEGEESFSSVQDDLSKAEKQKSPNKAELFSTARKTYSPAKHGKGRASEDAKQPCKSAHRKEACSSPKASAKLALMKAKEESSYNETELLAARRKESATEPKGEKTTPKKTKVSPTKRESVSPEDSEKKRTNYQAYRSYLNREGPKALGSKEIPKGAENCLEGLTFVITGVLESIERDEAKSLIERYGGKVTGNVSKKTNYLVMGRDSGQSKSDKAAALGTKILDEDGLLDLIRTMPGKRSKYEMAAEAEMKKEKSKLERTPQKNDQGKRKISPAKKESESKKCKLTLLKNSPMKAVKKEASTCPRGLDVKETHGNRSSNKEECLLWVDKYKPASLKNIIGQQGDQSCANKLLRWLRNWHKSSPEEKKHAAKFGKLASKDDGSSFKAALLSGPPGVGKTTTASLVCQELGYSYVELNASDTRSKNSLKAVVAESLNNTSIKGFYTSGAAPSVSARHALIMDEVDGMAGNEDRGGIQELIGLIKHTKIPIICMCNDRNHPKIRSLVHYCFDLRFQRPRVEQIKSAMLSIAFKEGLKIPPPAMNEIILGANQDVRQVLHNLSMWCAQSKALTYDQAKADSQRAKKDIRLGPFDVTRKVFAAGEETAHMSLMDKSDLFFHDYSIAPLFVQENYLHVKPVAAGGDMKKHLMLLSRAADSICDGDLVDNQIRSKQNWSLLPTQAIYASVLPGELMRGYMTQFPSFPSWLGKHSSTGKHDRIVQDLSLHMSLRTYSSKRTVNMDYLSHIRDALVRPLTSQGVEGAQHVIKLMDTYYLMKEDFENIMEVSSWGGKPSAFSKLDPKVKAAFTRAYNKEAHLTPYSLQVVKTSRLSTGPALDSEYSEEFQEDDTQSEKEQDAVETDAMIKKKTRSSKPSKSEREKESKKGKGKNWKK.

Disordered stretches follow at residues 14–87, 92–111, 120–201, and 225–378; these read KKPV…KSEK, YKPG…ETDE, AASK…NDEA, and ARTL…NYQA. Over residues 38–54 the composition is skewed to basic and acidic residues; it reads GVKEAKVNNSGKEDASK. Lysine 49 participates in a covalent cross-link: Glycyl lysine isopeptide (Lys-Gly) (interchain with G-Cter in SUMO2). Tyrosine 66 is modified (phosphotyrosine). A phosphoserine mark is found at serine 68, serine 70, serine 72, and serine 107. Threonine 109 bears the Phosphothreonine mark. Residues 127-138 are compositionally biased toward polar residues; that stretch reads NGVSTNSYLGTS. At serine 155 the chain carries Phosphoserine. 2 positions are modified to phosphothreonine: threonine 160 and threonine 162. A phosphoserine mark is found at serine 163, serine 172, serine 189, serine 244, serine 250, serine 253, serine 281, and serine 309. Residues 184 to 201 show a composition bias toward basic and acidic residues; sequence KRKESSQNTEDSRLNDEA. Residues 308-319 show a composition bias toward low complexity; it reads SSPKASAKLALM. 2 stretches are compositionally biased toward basic and acidic residues: residues 334 to 350 and 359 to 373; these read AARR…EKTT and TKRE…EKKR. Positions 354-528 are interferon-stimulated-response-element binding region; the sequence is TKVSPTKRES…KKESESKKCK (175 aa). A Phosphoserine modification is found at serine 365. A BRCT domain is found at 399–489; that stretch reads GAENCLEGLT…PGKRSKYEMA (91 aa). The tract at residues 491–525 is disordered; it reads EAEMKKEKSKLERTPQKNDQGKRKISPAKKESESK. Serine 535 is modified (phosphoserine). 635 to 642 serves as a coordination point for ATP; sequence GPPGVGKT. Residues 1073 to 1131 form a disordered region; the sequence is PALDSEYSEEFQEDDTQSEKEQDAVETDAMIKKKTRSSKPSKSEREKESKKGKGKNWKK. The span at 1078–1088 shows a compositional bias: acidic residues; sequence EYSEEFQEDDT. Residue serine 1090 is modified to Phosphoserine. The Nuclear localization signal signature appears at 1104-1108; the sequence is KKKTR. Over residues 1113-1123 the composition is skewed to basic and acidic residues; it reads SKSEREKESKK.

This sequence belongs to the activator 1 large subunit family. As to quaternary structure, large subunit of the RFC complex, an heteropentameric complex consisting of RFC1 and four small subunits RFC2, RFC3, RFC4 and RFC5; the RFC complex interacts with PCNA and the interaction involves RFC1.

The protein resides in the nucleus. Functionally, subunit of the replication factor C (RFC) complex which acts during elongation of primed DNA templates by DNA polymerases delta and epsilon, and is necessary for ATP-dependent loading of proliferating cell nuclear antigen (PCNA) onto primed DNA. This subunit binds to the primer-template junction. Binds the PO-B transcription element as well as other GA rich DNA sequences. Can bind single- or double-stranded DNA. The chain is Replication factor C subunit 1 (Rfc1) from Mus musculus (Mouse).